A 237-amino-acid chain; its full sequence is (5-formylfuran-3-yl)methyl phosphate synthase (237 aa).

Lys-29 (schiff-base intermediate with substrate) is an active-site residue. Lys-87 (proton acceptor) is an active-site residue.

The protein belongs to the MfnB family.

It carries out the reaction 2 D-glyceraldehyde 3-phosphate = 4-(hydroxymethyl)-2-furancarboxaldehyde phosphate + phosphate + 2 H2O. The protein operates within cofactor biosynthesis; methanofuran biosynthesis. Functionally, catalyzes the formation of 4-(hydroxymethyl)-2-furancarboxaldehyde phosphate (4-HFC-P) from two molecules of glyceraldehyde-3-P (GA-3-P). The chain is (5-formylfuran-3-yl)methyl phosphate synthase from Methanopyrus kandleri (strain AV19 / DSM 6324 / JCM 9639 / NBRC 100938).